The primary structure comprises 716 residues: ATP-dependent DNA helicase DinG (716 aa).

The Helicase ATP-binding domain occupies 17–294 (ALQEQIPDFI…TCMEQFRPKT (278 aa)). Residue 54-61 (APTGVGKT) participates in ATP binding. Cysteine 120 lines the [4Fe-4S] cluster pocket. The short motif at 131–134 (EPTQ) is the DEAH box element. Residues cysteine 194, cysteine 199, and cysteine 205 each contribute to the [4Fe-4S] cluster site. The short motif at 248–251 (DEGH) is the DEAH box element. The Helicase C-terminal domain maps to 517–698 (HIAEMAAFFR…VFPIEQPEVP (182 aa)).

The protein belongs to the helicase family. DinG subfamily. Type 1 sub-subfamily. It depends on [4Fe-4S] cluster as a cofactor.

It catalyses the reaction Couples ATP hydrolysis with the unwinding of duplex DNA at the replication fork by translocating in the 5'-3' direction. This creates two antiparallel DNA single strands (ssDNA). The leading ssDNA polymer is the template for DNA polymerase III holoenzyme which synthesizes a continuous strand.. It carries out the reaction ATP + H2O = ADP + phosphate + H(+). DNA-dependent ATPase and 5'-3' DNA helicase. Unwinds D-loops, R-loops, forked DNA and G-quadruplex DNA. This is ATP-dependent DNA helicase DinG from Escherichia coli O6:H1 (strain CFT073 / ATCC 700928 / UPEC).